Consider the following 224-residue polypeptide: MRLAKPKAGISRSSSQGKAYENKRKTGRQRQKWGMTIRFDSSFSRLRRSLDDKPYKCTECEKSFSQSSTLFQHQKIHTGKKSHKCADCGKSFFQSSNLIQHRRIHTGEKPYKCDECGESFKQSSNLIQHQRIHTGEKPYQCDECGRCFSQSSHLIQHQRTHTGEKPYQCSECGKCFSQSSHLRQHMKVHKEEKPRKTRGKNIRVKTHLPSWKAGTGRKSVAGLR.

Positions 1–34 (MRLAKPKAGISRSSSQGKAYENKRKTGRQRQKWG) are disordered. An N6-acetyllysine mark is found at lysine 18 and lysine 23. Serine 49 carries the post-translational modification Phosphoserine. 5 consecutive C2H2-type zinc fingers follow at residues 55–77 (YKCTECEKSFSQSSTLFQHQKIH), 83–105 (HKCADCGKSFFQSSNLIQHRRIH), 111–133 (YKCDECGESFKQSSNLIQHQRIH), 139–161 (YQCDECGRCFSQSSHLIQHQRTH), and 167–189 (YQCSECGKCFSQSSHLRQHMKVH).

This sequence belongs to the krueppel C2H2-type zinc-finger protein family. In terms of tissue distribution, in the embryo, expressed in developing craniofacial structures including dental epithelium of maxillary molar tooth organs, tongue epithelium and muscle, and craniofacial bone osteoblasts. In the adult, expressed in mesoderm-derived tissues such as skeletal muscle, heart, kidney and liver. Intermediate expression in spleen, thymus and brain. Low levels in endoderm-derived tissues such as intestine and colon.

The protein localises to the nucleus. Binds DNA through the consensus sequence 5'-CAATG-3'. May be involved in transcriptional regulation and may play a role in tooth formation. This is Zinc finger protein 22 (ZNF22) from Homo sapiens (Human).